A 279-amino-acid chain; its full sequence is Hydroxyethylthiazole kinase (279 aa).

Residue M58 coordinates substrate. 2 residues coordinate ATP: K134 and T180. G207 is a substrate binding site.

It belongs to the Thz kinase family. Mg(2+) is required as a cofactor.

It catalyses the reaction 5-(2-hydroxyethyl)-4-methylthiazole + ATP = 4-methyl-5-(2-phosphooxyethyl)-thiazole + ADP + H(+). It functions in the pathway cofactor biosynthesis; thiamine diphosphate biosynthesis; 4-methyl-5-(2-phosphoethyl)-thiazole from 5-(2-hydroxyethyl)-4-methylthiazole: step 1/1. In terms of biological role, catalyzes the phosphorylation of the hydroxyl group of 4-methyl-5-beta-hydroxyethylthiazole (THZ). In Methanoculleus marisnigri (strain ATCC 35101 / DSM 1498 / JR1), this protein is Hydroxyethylthiazole kinase.